A 470-amino-acid polypeptide reads, in one-letter code: 6-phospho-beta-galactosidase 1 (470 aa).

Positions 23, 120, 163, 164, and 300 each coordinate D-galactose 6-phosphate. Catalysis depends on glutamate 164, which acts as the Proton donor. Residue glutamate 378 is the Nucleophile of the active site. Residues serine 434, tryptophan 435, lysine 441, and tyrosine 443 each coordinate D-galactose 6-phosphate.

Belongs to the glycosyl hydrolase 1 family.

It carries out the reaction a 6-phospho-beta-D-galactoside + H2O = D-galactose 6-phosphate + an alcohol. Its pathway is carbohydrate metabolism; lactose degradation; D-galactose 6-phosphate and beta-D-glucose from lactose 6-phosphate: step 1/1. This is 6-phospho-beta-galactosidase 1 from Streptococcus pneumoniae (strain ATCC BAA-255 / R6).